The chain runs to 238 residues: ATP-dependent dethiobiotin synthetase BioD (238 aa).

Residue 12 to 17 coordinates ATP; it reads GVGKTV. Position 16 (Thr16) interacts with Mg(2+). Lys37 is a catalytic residue. A substrate-binding site is contributed by Thr41. ATP is bound by residues Asp50, 109 to 112, 170 to 171, and 200 to 202; these read EGAG, GS, and PAG. Residues Asp50 and Glu109 each contribute to the Mg(2+) site.

This sequence belongs to the dethiobiotin synthetase family. As to quaternary structure, homodimer. The cofactor is Mg(2+).

It localises to the cytoplasm. The catalysed reaction is (7R,8S)-7,8-diammoniononanoate + CO2 + ATP = (4R,5S)-dethiobiotin + ADP + phosphate + 3 H(+). The protein operates within cofactor biosynthesis; biotin biosynthesis; biotin from 7,8-diaminononanoate: step 1/2. In terms of biological role, catalyzes a mechanistically unusual reaction, the ATP-dependent insertion of CO2 between the N7 and N8 nitrogen atoms of 7,8-diaminopelargonic acid (DAPA, also called 7,8-diammoniononanoate) to form a ureido ring. This chain is ATP-dependent dethiobiotin synthetase BioD, found in Frankia casuarinae (strain DSM 45818 / CECT 9043 / HFP020203 / CcI3).